A 926-amino-acid chain; its full sequence is Neurofilament medium polypeptide (926 aa).

The span at 1–10 shows a compositional bias: polar residues; it reads MSYTLDSLGN. Disordered regions lie at residues 1–51 and 79–102; these read MSYT…VSSS and QSSS…SNEK. Ser-2 bears the N-acetylserine mark. The head stretch occupies residues 2–104; the sequence is SYTLDSLGNP…KLSRSNEKEQ (103 aa). Over residues 21 to 44 the composition is skewed to low complexity; sequence RSSFSRISGSPSSGFRSQSWSRGS. Position 30 is a phosphoserine (Ser-30). Arg-42 is modified (omega-N-methylarginine). Residue Thr-47 is glycosylated (O-linked (GlcNAc) threonine). Ser-99 bears the Phosphoserine mark. An IF rod domain is found at 101-412; it reads EKEQIQGLND…KLLEGEETRF (312 aa). Positions 105–136 are coil 1A; that stretch reads IQGLNDRFAGYIEKVHYLEQQNKEIEAEIQAL. The tract at residues 137 to 149 is linker 1; it reads RQKQASHAQLGDA. The segment at 150–248 is coil 1B; that stretch reads YDQEIRELRA…EEEVADLLAQ (99 aa). Ser-226 bears the Phosphoserine mark. The linker 12 stretch occupies residues 249–265; sequence IQASHITVERKDYLKTD. Residues 266-287 are coil 2A; the sequence is ISTALKEIRSQLESHSDQNMHQ. Residues 288 to 291 are linker 2; the sequence is AEEW. The tract at residues 292–412 is coil 2B; that stretch reads FKCRYAKLTE…KLLEGEETRF (121 aa). Position 320 is a phosphotyrosine (Tyr-320). Ser-346, Ser-418, Ser-430, Ser-468, and Ser-484 each carry phosphoserine. Residues 413–926 form a tail region; that stretch reads STFAGSITGP…AIVKEVTQSD (514 aa). The tract at residues 487-860 is disordered; it reads EEVKEEEAEE…EKKGGDKSEE (374 aa). The segment covering 490–507 has biased composition (acidic residues); the sequence is KEEEAEEKEEKEEAEEEV. Repeat unit 1 spans residues 512 to 516; the sequence is KSPVK. The tract at residues 512 to 698 is 17 X 5 AA approximate tandem repeats of K-S-P-[TVEA]-[AKETP]; the sequence is KSPVKATAPE…KSPAPKSPVE (187 aa). A Phosphoserine modification is found at Ser-513. Acidic residues predominate over residues 523-543; it reads KEEEGEKEEEEGQEEEEEEEE. Residues 544-563 show a composition bias toward basic and acidic residues; that stretch reads AAKSDQAEEGGSEKEGSSEK. Phosphoserine occurs at positions 547, 555, 560, and 561. Residues 564–584 show a composition bias toward acidic residues; the sequence is EEGEQEEEGETEAEGEGEEAA. Thr-574 bears the Phosphothreonine mark. Residues 585 to 619 show a composition bias toward basic and acidic residues; sequence AEAKEEKKMEEKAEEVAPKEELAAEAKVEKPEKAK. A run of 16 repeats spans residues 619-623, 624-628, 629-633, 634-638, 639-643, 644-648, 649-653, 654-658, 659-663, 664-668, 669-673, 674-678, 679-683, 684-688, 689-693, and 694-698. The residue at position 628 (Thr-628) is a Phosphothreonine. A phosphoserine mark is found at Ser-630, Ser-635, and Ser-640. Residue Thr-647 is modified to Phosphothreonine. Ser-650 and Ser-655 each carry phosphoserine. Phosphoserine is present on residues Ser-665 and Ser-670. The segment covering 673–692 has biased composition (low complexity); the sequence is AKSPTAKSPTAKSPAAKSPA. Residue Thr-677 is modified to Phosphothreonine. Phosphoserine occurs at positions 680, 685, 690, 695, 727, 751, 757, 771, 831, and 847. 3 stretches are compositionally biased toward basic and acidic residues: residues 696 to 764, 771 to 811, and 826 to 838; these read PVEE…EEVP, SPEK…KEDI, and TKEK…EEKG. Over residues 849–860 the composition is skewed to basic and acidic residues; the sequence is GDEKKGGDKSEE.

In terms of assembly, forms heterodimers with NEFL; which can further hetero-oligomerize (in vitro). Forms heterodimers with INA (in vitro). Post-translationally, phosphorylated on a number of serine residues in the repeated K-S-P tripeptide motif. Phosphorylation of NFH may result in the formation of interfilament cross-links that are important in the maintenance of axonal caliber. Phosphorylation seems to play a major role in the functioning of the larger neurofilament polypeptides (NF-M and NF-H), the levels of phosphorylation being altered developmentally and coincidentally with a change in the neurofilament function. In terms of processing, phosphorylated in the head and rod regions by the PKC kinase PKN1, leading to the inhibition of polymerization.

The protein resides in the cytoplasm. It is found in the cytoskeleton. The protein localises to the cell projection. It localises to the axon. In terms of biological role, neurofilaments usually contain three intermediate filament proteins: NEFL, NEFM, and NEFH which are involved in the maintenance of neuronal caliber. May additionally cooperate with the neuronal intermediate filament proteins PRPH and INA to form neuronal filamentous networks. In Bos taurus (Bovine), this protein is Neurofilament medium polypeptide (NEFM).